A 529-amino-acid polypeptide reads, in one-letter code: BAR/IMD domain-containing adapter protein 2-like 2 (529 aa).

The IMD domain maps to 1–239; that stretch reads MAPEMDQFYR…HSPGLLGPAL (239 aa). Disordered regions lie at residues 221 to 327 and 403 to 510; these read EASR…GGAR and TSMS…TNPF. 3 positions are modified to phosphoserine: Ser-231, Ser-272, and Ser-302. A compositionally biased stretch (low complexity) spans 299 to 313; the sequence is SASSLYSGSAQSSRS. One can recognise an SH3 domain in the interval 324–387; sequence GGARRVRALV…PEAYVKALEE (64 aa). Composition is skewed to low complexity over residues 403 to 413 and 452 to 462; these read TSMSPMTPMNP and RSRTPSRVPSR. Pro residues predominate over residues 463 to 472; it reads APSPAPPPLP. Phosphoserine occurs at positions 478 and 481.

In terms of tissue distribution, expressed in the epithelial layer of the intestine (at protein level).

It is found in the cell membrane. Its subcellular location is the cell junction. The protein localises to the cytoplasmic vesicle membrane. Phosphoinositides-binding protein that induces the formation of planar or gently curved membrane structures. Binds to phosphoinositides, including to phosphatidylinositol 4,5-bisphosphate (PtdIns(4,5)P2) headgroups. There seems to be no clear preference for a specific phosphoinositide. The chain is BAR/IMD domain-containing adapter protein 2-like 2 (BAIAP2L2) from Homo sapiens (Human).